Here is a 377-residue protein sequence, read N- to C-terminus: Protein-glutamate methylesterase/protein-glutamine glutaminase 1 (377 aa).

Residues 4 to 121 (KVLVVDDSSF…ARNRDEAVTL (118 aa)) enclose the Response regulatory domain. Aspartate 55 carries the 4-aspartylphosphate modification. The disordered stretch occupies residues 138-170 (RPAAPRPAPTTSIAASSSLSQERAAATSPLGNR). Positions 146 to 157 (PTTSIAASSSLS) are enriched in low complexity. Positions 184-377 (SGKKYQLTAI…ERMLVEVGLA (194 aa)) constitute a CheB-type methylesterase domain. Catalysis depends on residues serine 196, histidine 223, and aspartate 319.

Belongs to the CheB family. Post-translationally, phosphorylated by CheA. Phosphorylation of the N-terminal regulatory domain activates the methylesterase activity.

It is found in the cytoplasm. It catalyses the reaction [protein]-L-glutamate 5-O-methyl ester + H2O = L-glutamyl-[protein] + methanol + H(+). It carries out the reaction L-glutaminyl-[protein] + H2O = L-glutamyl-[protein] + NH4(+). In terms of biological role, involved in chemotaxis. Part of a chemotaxis signal transduction system that modulates chemotaxis in response to various stimuli. Catalyzes the demethylation of specific methylglutamate residues introduced into the chemoreceptors (methyl-accepting chemotaxis proteins or MCP) by CheR. Also mediates the irreversible deamidation of specific glutamine residues to glutamic acid. The polypeptide is Protein-glutamate methylesterase/protein-glutamine glutaminase 1 (Vibrio cholerae serotype O1 (strain ATCC 39315 / El Tor Inaba N16961)).